Consider the following 282-residue polypeptide: Undecaprenyl-diphosphatase (282 aa).

The next 6 helical transmembrane spans lie at 90-110, 121-141, 165-185, 194-214, 228-248, and 256-276; these read YRLG…GLLF, LWVV…AEYL, LALV…LFLG, FGFL…LPDA, QLLV…SWFL, and MYWF…LLAT.

Belongs to the UppP family.

It localises to the cell membrane. It catalyses the reaction di-trans,octa-cis-undecaprenyl diphosphate + H2O = di-trans,octa-cis-undecaprenyl phosphate + phosphate + H(+). Functionally, catalyzes the dephosphorylation of undecaprenyl diphosphate (UPP). Confers resistance to bacitracin. In Mycobacterium marinum (strain ATCC BAA-535 / M), this protein is Undecaprenyl-diphosphatase.